The sequence spans 638 residues: Chaperone protein HtpG (638 aa).

The interval 1–346 (MSQQETHGFQ…SNDLPLNVSR (346 aa)) is a; substrate-binding. The b stretch occupies residues 347 to 563 (EILQDNKVTT…EGEMSTQMIK (217 aa)). The tract at residues 564-638 (LMEAAGQAVP…MNEMLLAKLK (75 aa)) is c.

The protein belongs to the heat shock protein 90 family. As to quaternary structure, homodimer.

The protein localises to the cytoplasm. Functionally, molecular chaperone. Has ATPase activity. The polypeptide is Chaperone protein HtpG (Shewanella sediminis (strain HAW-EB3)).